The following is a 381-amino-acid chain: Chaperone protein DnaJ (381 aa).

A J domain is found at 5 to 70 (DFYEVLGVSR…QKKAAYDQYG (66 aa)). The CR-type zinc finger occupies 136-214 (GVSKEIEVPT…CHGQGRKQKT (79 aa)). Residues Cys-149, Cys-152, Cys-166, Cys-169, Cys-188, Cys-191, Cys-202, and Cys-205 each contribute to the Zn(2+) site. CXXCXGXG motif repeat units lie at residues 149–156 (CDICDGSG), 166–173 (CGTCHGHG), 188–195 (CPTCNGKG), and 202–209 (CNSCHGQG).

It belongs to the DnaJ family. Homodimer. Requires Zn(2+) as cofactor.

The protein resides in the cytoplasm. Participates actively in the response to hyperosmotic and heat shock by preventing the aggregation of stress-denatured proteins and by disaggregating proteins, also in an autonomous, DnaK-independent fashion. Unfolded proteins bind initially to DnaJ; upon interaction with the DnaJ-bound protein, DnaK hydrolyzes its bound ATP, resulting in the formation of a stable complex. GrpE releases ADP from DnaK; ATP binding to DnaK triggers the release of the substrate protein, thus completing the reaction cycle. Several rounds of ATP-dependent interactions between DnaJ, DnaK and GrpE are required for fully efficient folding. Also involved, together with DnaK and GrpE, in the DNA replication of plasmids through activation of initiation proteins. The protein is Chaperone protein DnaJ of Vibrio atlanticus (strain LGP32) (Vibrio splendidus (strain Mel32)).